A 185-amino-acid polypeptide reads, in one-letter code: Peptidyl-tRNA hydrolase (185 aa).

Y14 lines the tRNA pocket. H19 functions as the Proton acceptor in the catalytic mechanism. Positions 64, 66, and 112 each coordinate tRNA.

Belongs to the PTH family. Monomer.

The protein resides in the cytoplasm. The enzyme catalyses an N-acyl-L-alpha-aminoacyl-tRNA + H2O = an N-acyl-L-amino acid + a tRNA + H(+). Hydrolyzes ribosome-free peptidyl-tRNAs (with 1 or more amino acids incorporated), which drop off the ribosome during protein synthesis, or as a result of ribosome stalling. In terms of biological role, catalyzes the release of premature peptidyl moieties from peptidyl-tRNA molecules trapped in stalled 50S ribosomal subunits, and thus maintains levels of free tRNAs and 50S ribosomes. The chain is Peptidyl-tRNA hydrolase from Alkaliphilus oremlandii (strain OhILAs) (Clostridium oremlandii (strain OhILAs)).